A 412-amino-acid chain; its full sequence is Histidinol dehydrogenase (412 aa).

Positions 118, 176, and 199 each coordinate NAD(+). Residues Thr222, Gln244, and His247 each contribute to the substrate site. Zn(2+) contacts are provided by Gln244 and His247. Residues Glu311 and His312 each act as proton acceptor in the active site. His312, Asp345, Glu399, and His404 together coordinate substrate. Zn(2+) is bound at residue Asp345. Residue His404 participates in Zn(2+) binding.

The protein belongs to the histidinol dehydrogenase family. The cofactor is Zn(2+).

The enzyme catalyses L-histidinol + 2 NAD(+) + H2O = L-histidine + 2 NADH + 3 H(+). It participates in amino-acid biosynthesis; L-histidine biosynthesis; L-histidine from 5-phospho-alpha-D-ribose 1-diphosphate: step 9/9. In terms of biological role, catalyzes the sequential NAD-dependent oxidations of L-histidinol to L-histidinaldehyde and then to L-histidine. The chain is Histidinol dehydrogenase from Thermus thermophilus (strain ATCC BAA-163 / DSM 7039 / HB27).